The following is a 480-amino-acid chain: Protein nucleotidyltransferase YdiU (480 aa).

Residues glycine 86, glycine 88, arginine 89, lysine 109, aspartate 121, glycine 122, arginine 172, and arginine 179 each contribute to the ATP site. Aspartate 248 serves as the catalytic Proton acceptor. Asparagine 249 and aspartate 258 together coordinate Mg(2+). ATP is bound at residue aspartate 258.

This sequence belongs to the SELO family. Mg(2+) is required as a cofactor. Mn(2+) serves as cofactor.

It carries out the reaction L-seryl-[protein] + ATP = 3-O-(5'-adenylyl)-L-seryl-[protein] + diphosphate. It catalyses the reaction L-threonyl-[protein] + ATP = 3-O-(5'-adenylyl)-L-threonyl-[protein] + diphosphate. The enzyme catalyses L-tyrosyl-[protein] + ATP = O-(5'-adenylyl)-L-tyrosyl-[protein] + diphosphate. The catalysed reaction is L-histidyl-[protein] + UTP = N(tele)-(5'-uridylyl)-L-histidyl-[protein] + diphosphate. It carries out the reaction L-seryl-[protein] + UTP = O-(5'-uridylyl)-L-seryl-[protein] + diphosphate. It catalyses the reaction L-tyrosyl-[protein] + UTP = O-(5'-uridylyl)-L-tyrosyl-[protein] + diphosphate. Nucleotidyltransferase involved in the post-translational modification of proteins. It can catalyze the addition of adenosine monophosphate (AMP) or uridine monophosphate (UMP) to a protein, resulting in modifications known as AMPylation and UMPylation. The protein is Protein nucleotidyltransferase YdiU of Salmonella agona (strain SL483).